The following is a 25-amino-acid chain: Caerin-1.3 (25 aa).

Leucine 25 is subject to Leucine amide.

In terms of tissue distribution, expressed by the skin parotoid and/or rostral glands.

The protein resides in the secreted. Antibacterial peptide, that adopts an alpha helical conformation which can disrupt bacterial membranes. Each caerin displays a different antimicrobial specificity. This Ranoidea caerulea (Green tree frog) protein is Caerin-1.3.